Reading from the N-terminus, the 289-residue chain is ATP synthase subunit a (289 aa).

6 helical membrane-spanning segments follow: residues 43-63, 103-123, 160-180, 193-213, 232-252, and 259-279; these read AFHVDTLGWSVALGLIFVLLF, VIAPLALTIFVWVFLMNAVDL, FSVFALIIFYSIKVKGLGGFI, IFVQALLIPVNFLLEFVTLIA, VFILIAVMFGSGLLWLSGLGV, and AVFHILIITLQAFIFMMLTIV.

The protein belongs to the ATPase A chain family. In terms of assembly, F-type ATPases have 2 components, CF(1) - the catalytic core - and CF(0) - the membrane proton channel. CF(1) has five subunits: alpha(3), beta(3), gamma(1), delta(1), epsilon(1). CF(0) has three main subunits: a(1), b(2) and c(9-12). The alpha and beta chains form an alternating ring which encloses part of the gamma chain. CF(1) is attached to CF(0) by a central stalk formed by the gamma and epsilon chains, while a peripheral stalk is formed by the delta and b chains.

Its subcellular location is the cell inner membrane. Its function is as follows. Key component of the proton channel; it plays a direct role in the translocation of protons across the membrane. The sequence is that of ATP synthase subunit a from Pseudomonas fluorescens (strain Pf0-1).